The sequence spans 961 residues: Endochitinase A (961 aa).

A signal peptide spans 1–21 (MAPKLFTFVSALSGLASLASA). In terms of domain architecture, GH18 spans 28 to 339 (SNIAVYYGQG…EKIREILYDL (312 aa)). Glutamate 175 acts as the Proton donor in catalysis. Disordered regions lie at residues 338-720 (DLDP…TTTE), 767-787 (TDVP…TADI), 813-842 (PPAT…GEVS), and 912-933 (HVPV…ASPT). Residues 342–355 (NHPPPTTSPTPTPT) are compositionally biased toward pro residues. 4 stretches are compositionally biased toward low complexity: residues 356 to 510 (PSTT…STSS), 519 to 544 (SSTS…PVIS), 552 to 604 (TSSS…PETT), and 612 to 635 (TPGS…PATS). A compositionally biased stretch (polar residues) spans 636–665 (GGHTETSTVSTSSANQTPSASTSKPLIPTN). The segment covering 666-720 (SASSTSTGSVTSTPSAPGVPSSSAGSDETATTSTTDSEPTSTSSGSVTAKPTTTE) has biased composition (low complexity). Residue glycine 936 is the site of GPI-anchor amidated glycine attachment. A propeptide spans 937–961 (AGSRYDVVKGVPALVALALSLLAVL) (removed in mature form).

It belongs to the glycosyl hydrolase 18 family. Chitinase class III subfamily. Post-translationally, O-glycosylated but not N-glycosylated.

The protein localises to the cell membrane. It is found in the secreted. It localises to the cell wall. Its subcellular location is the cell tip. It catalyses the reaction Random endo-hydrolysis of N-acetyl-beta-D-glucosaminide (1-&gt;4)-beta-linkages in chitin and chitodextrins.. GPI-anchored chitinase involved in the degradation of chitin, a component of the cell walls of fungi and exoskeletal elements of some animals (including worms and arthropods). Required to reshape the cell wall at the sites where cell wall remodeling and/or cell wall maturation actively take place such as sites of conidia formation. The protein is Endochitinase A (chiA) of Emericella nidulans (Aspergillus nidulans).